The sequence spans 440 residues: Damage-control phosphatase ARMT1 (440 aa).

Positions 252 and 253 each coordinate Mn(2+). 252–253 (DN) provides a ligand contact to substrate. S-adenosyl-L-methionine is bound by residues glutamate 257 and aspartate 290. Aspartate 290 is a Mn(2+) binding site. Residues 366–370 (DLNYR) and lysine 403 each bind substrate. Residues 400 to 403 (RTLK) carry the Subfamily III RTxK motif motif.

Belongs to the damage-control phosphatase family. Sugar phosphate phosphatase III subfamily. Mn(2+) serves as cofactor. The cofactor is Ni(2+). Post-translationally, automethylated.

The catalysed reaction is beta-D-fructose 1-phosphate + H2O = D-fructose + phosphate. The enzyme catalyses beta-D-fructose 6-phosphate = dihydroxyacetone + D-glyceraldehyde 3-phosphate. It catalyses the reaction L-glutamyl-[protein] + S-adenosyl-L-methionine = [protein]-L-glutamate 5-O-methyl ester + S-adenosyl-L-homocysteine. In terms of biological role, metal-dependent phosphatase that shows phosphatase activity against several substrates, including fructose-1-phosphate and fructose-6-phosphate. Its preference for fructose-1-phosphate, a strong glycating agent that causes DNA damage rather than a canonical yeast metabolite, suggests a damage-control function in hexose phosphate metabolism. Has also been shown to have O-methyltransferase activity that methylates glutamate residues of target proteins to form gamma-glutamyl methyl ester residues. Possibly methylates PCNA, suggesting it is involved in the DNA damage response. The chain is Damage-control phosphatase ARMT1 from Xenopus laevis (African clawed frog).